A 553-amino-acid polypeptide reads, in one-letter code: MEKRALIALVLSLLVLVFWEMYFGLFRMPAPPPNKTEQAAPTTTQPATPQTVPPQAATPQALPQDHVFRPDQQFQSWAIEDPLYRMNIIAPGARLSSFELKKHRKAVQPDSPPMQMVTSQTGGYLPMAIDLLHHQDWQLSTRPFFSEAGPKTVLEDKKPRVLSFSTEVPGKVRVTKSFTCSPESYLLDLEVQIGNLSSERLVDQMGISFYFLPFSPPEEESSYNPSQLTTLEKGSLKNFTTKDLSKSDLVLKPPMTWVAYENNFFINAIIPVAEGGYQFVPRILDATKGLLQLVYLTDPFQLEGNETKSFKLRFYIGPKELSTLARAEHQLASAVDYGWFTFIAKPLVYVLDWFYRYTHNWGVAIILLTIVIKILFWPLTQKSYQSMQKMKKIQPKMTQIREKYKGDREKMNQELMGLYRTYKVNPMGGCLPMLLQIPVFFALYRMLNGAVELRHEPFMLWIDDLTAPDRLPIGFDIPYLGGLPVLTLLMGITMFIQQKMTPSAGDPRQDQIMMIMPVMFTVFFVNFPSGLVLYWLVNNVLSIAQQYWVNRHA.

The chain crosses the membrane as a helical span at residues 6–26 (LIALVLSLLVLVFWEMYFGLF). Residues 34–59 (NKTEQAAPTTTQPATPQTVPPQAATP) are disordered. Low complexity predominate over residues 38-59 (QAAPTTTQPATPQTVPPQAATP). The next 5 helical transmembrane spans lie at 331-351 (LASA…VYVL), 360-380 (NWGV…WPLT), 424-444 (VNPM…FALY), 477-497 (IPYL…MFIQ), and 512-532 (IMMI…SGLV).

It belongs to the OXA1/ALB3/YidC family. Type 1 subfamily. As to quaternary structure, interacts with the Sec translocase complex via SecD. Specifically interacts with transmembrane segments of nascent integral membrane proteins during membrane integration.

Its subcellular location is the cell inner membrane. Required for the insertion and/or proper folding and/or complex formation of integral membrane proteins into the membrane. Involved in integration of membrane proteins that insert both dependently and independently of the Sec translocase complex, as well as at least some lipoproteins. Aids folding of multispanning membrane proteins. This is Membrane protein insertase YidC from Syntrophobacter fumaroxidans (strain DSM 10017 / MPOB).